The chain runs to 185 residues: Lactoylglutathione lyase (185 aa).

The disordered stretch occupies residues 1–21; it reads MASEAKESPANNPGLSTVRDE. In terms of domain architecture, VOC spans 27–174; sequence IMQQTMFRVK…DGYWIEIFDL (148 aa). Substrate contacts are provided by glutamine 30 and arginine 34. Residue glutamine 30 coordinates Zn(2+). Glutamate 96 contributes to the Zn(2+) binding site. Substrate-binding positions include asparagine 100, arginine 120, histidine 124, and 154-155; that span reads KM. Residue histidine 124 coordinates Zn(2+). Glutamate 170 contacts Zn(2+). Catalysis depends on glutamate 170, which acts as the Proton donor/acceptor.

It belongs to the glyoxalase I family. It depends on Zn(2+) as a cofactor.

It carries out the reaction (R)-S-lactoylglutathione = methylglyoxal + glutathione. It functions in the pathway secondary metabolite metabolism; methylglyoxal degradation; (R)-lactate from methylglyoxal: step 1/2. Functionally, catalyzes the conversion of hemimercaptal, formed from methylglyoxal and glutathione, to S-lactoylglutathione. This is Lactoylglutathione lyase (GLY I) from Brassica juncea (Indian mustard).